The primary structure comprises 227 residues: PKHD-type hydroxylase Bpro_3048 (227 aa).

Residues 78 to 179 (KIFTPRINRY…RLACFFWVES (102 aa)) form the Fe2OG dioxygenase domain. Fe cation-binding residues include His-97, Asp-99, and His-160. Residue Arg-170 coordinates 2-oxoglutarate.

Requires Fe(2+) as cofactor. The cofactor is L-ascorbate.

This chain is PKHD-type hydroxylase Bpro_3048, found in Polaromonas sp. (strain JS666 / ATCC BAA-500).